The chain runs to 37 residues: Large ribosomal subunit protein bL36 (37 aa).

It belongs to the bacterial ribosomal protein bL36 family.

This chain is Large ribosomal subunit protein bL36, found in Nocardia farcinica (strain IFM 10152).